The primary structure comprises 385 residues: Methionine aminopeptidase 1 (385 aa).

A C6H2-type zinc finger spans residues 6-59; it reads SRVCETEGCSSEAKLQCPTCIKLGIQGSYFCSQECFKGSWATHKLLHKKAKDDK. Zn(2+) contacts are provided by Cys9, Cys14, Cys22, Cys25, Cys36, Cys40, His48, and His52. An a protein-binding site is contributed by His203. Zn(2+) contacts are provided by Asp220, Asp231, and His294. Residue His301 coordinates a protein. Positions 327 and 358 each coordinate Zn(2+).

Belongs to the peptidase M24A family. Methionine aminopeptidase type 1 subfamily. As to quaternary structure, associates with the 60S ribosomal subunit of the 80S translational complex. Requires Zn(2+) as cofactor. It depends on Co(2+) as a cofactor. Mn(2+) serves as cofactor. The cofactor is Fe(2+).

It is found in the cytoplasm. The enzyme catalyses Release of N-terminal amino acids, preferentially methionine, from peptides and arylamides.. Functionally, cotranslationally removes the N-terminal methionine from nascent proteins. The N-terminal methionine is often cleaved when the second residue in the primary sequence is small and uncharged (Met-Ala-, Cys, Gly, Pro, Ser, Thr, or Val). This is Methionine aminopeptidase 1 (metap1) from Xenopus laevis (African clawed frog).